Here is a 584-residue protein sequence, read N- to C-terminus: ATP-dependent lipid A-core flippase 2 (584 aa).

Transmembrane regions (helical) follow at residues 32-52, 68-88, 146-166, 167-187, 254-274, and 280-300; these read IFIA…MIYF, TLQL…IASF, SAVV…SMMV, YNSW…ALII, AISN…VLLL, and VLNQ…GSLL. The ABC transmembrane type-1 domain occupies 33–315; the sequence is FIALAGLCLF…LSNINQQLQK (283 aa). In terms of domain architecture, ABC transporter spans 347–583; that stretch reads IRFNNFSFTY…AGYYQSLYQS (237 aa). An ATP-binding site is contributed by 381–388; that stretch reads GESGSGKS.

This sequence belongs to the ABC transporter superfamily. Lipid exporter (TC 3.A.1.106) family. As to quaternary structure, homodimer.

Its subcellular location is the cell inner membrane. It catalyses the reaction ATP + H2O + lipid A-core oligosaccharideSide 1 = ADP + phosphate + lipid A-core oligosaccharideSide 2.. Functionally, involved in lipopolysaccharide (LPS) biosynthesis. Translocates lipid A-core from the inner to the outer leaflet of the inner membrane. Transmembrane domains (TMD) form a pore in the inner membrane and the ATP-binding domain (NBD) is responsible for energy generation. The polypeptide is ATP-dependent lipid A-core flippase 2 (Colwellia psychrerythraea (strain 34H / ATCC BAA-681) (Vibrio psychroerythus)).